A 471-amino-acid chain; its full sequence is POU domain protein 2 (471 aa).

The segment covering 1-18 (CGKSYEEEEEEEDDELEA) has biased composition (acidic residues). Disordered regions lie at residues 1 to 32 (CGKSYEEEEEEEDDELEADVAQNLSSKRSARQ) and 149 to 238 (DQQL…PKPL). The segment covering 165 to 180 (STPLSKSPLRSPSLSP) has biased composition (low complexity). The span at 186-196 (EPQQAQRTPPN) shows a compositional bias: polar residues. Positions 197–230 (SLAAAGLGLSSAVLTPNTPSMQQQQQQTMTSTTN) are enriched in low complexity. The POU-specific domain maps to 257-331 (EETTDLEELE…LLQKWLEDAD (75 aa)). The homeobox DNA-binding region spans 362 to 421 (RRKKRTSIETTIRGALEQAFVLNCKPTSEEINQLSERLHMDKEVVRVWFCNRRQKEKRIN).

Belongs to the POU transcription factor family. Class-2 subfamily.

It localises to the nucleus. Its function is as follows. DNA-binding regulatory protein implicated in early development. Involved in neuronal cell fate decision. May act as an octamer-dependent activator of transcription. In Drosophila virilis (Fruit fly), this protein is POU domain protein 2 (pdm2).